The following is a 390-amino-acid chain: Chorismate synthase 2 (390 aa).

NADP(+)-binding residues include arginine 39 and arginine 45. FMN is bound by residues 132 to 134 (RSS), 253 to 254 (NA), glycine 298, 313 to 317 (KPIPT), and arginine 339.

The protein belongs to the chorismate synthase family. As to quaternary structure, homotetramer. FMNH2 is required as a cofactor.

The catalysed reaction is 5-O-(1-carboxyvinyl)-3-phosphoshikimate = chorismate + phosphate. It functions in the pathway metabolic intermediate biosynthesis; chorismate biosynthesis; chorismate from D-erythrose 4-phosphate and phosphoenolpyruvate: step 7/7. Catalyzes the anti-1,4-elimination of the C-3 phosphate and the C-6 proR hydrogen from 5-enolpyruvylshikimate-3-phosphate (EPSP) to yield chorismate, which is the branch point compound that serves as the starting substrate for the three terminal pathways of aromatic amino acid biosynthesis. This reaction introduces a second double bond into the aromatic ring system. This Bacillus thuringiensis subsp. konkukian (strain 97-27) protein is Chorismate synthase 2.